A 146-amino-acid chain; its full sequence is Phospholipase A2 (146 aa).

An N-terminal signal peptide occupies residues 1 to 18 (MAFLVFAFLTLMAVETYG). Disulfide bonds link Cys44–Cys137, Cys46–Cys62, Cys61–Cys117, Cys67–Cys144, Cys68–Cys110, Cys77–Cys103, and Cys95–Cys108. Residues Tyr45, Gly47, and Gly49 each contribute to the Ca(2+) site. His65 is a catalytic residue. Asp66 is a binding site for Ca(2+). An N-linked (GlcNAc...) asparagine glycan is attached at Asn85. Asp111 is an active-site residue. The N-linked (GlcNAc...) asparagine glycan is linked to Asn126.

Ca(2+) is required as a cofactor. In terms of processing, N-glycosylated. Glycosylated with mannose chains including Man2(GlcNAc), Man2(GlcNAc)2, Man2(GlcNAc)3, Man2(GlcNAc)4 and Man2(GlcNAc)5. As to expression, expressed by the skin glands (at protein level).

The protein localises to the secreted. It carries out the reaction a 1,2-diacyl-sn-glycero-3-phosphocholine + H2O = a 1-acyl-sn-glycero-3-phosphocholine + a fatty acid + H(+). In terms of biological role, PLA2 catalyzes the calcium-dependent hydrolysis of the 2-acyl groups in 3-sn-phosphoglycerides. The chain is Phospholipase A2 from Pithecopus azureus (Orange-legged monkey tree frog).